Here is a 1008-residue protein sequence, read N- to C-terminus: Pre-mRNA-splicing factor SNU114 (1008 aa).

Residue Ser85 is modified to Phosphoserine. A Phosphothreonine modification is found at Thr88. The region spanning 131 to 338 is the tr-type G domain; it reads ERIINVGVIG…SYYYAHSIPS (208 aa). Residues 140-147 are G1; that stretch reads GPLHSGKT. 140–147 provides a ligand contact to GTP; that stretch reads GPLHSGKT. The tract at residues 188–192 is G2; the sequence is GLSIK. Residues 214 to 217 are G3; it reads DAPG. Residues 214–218 and 268–271 each bind GTP; these read DAPGH and NKLD. The G4 stretch occupies residues 268–271; it reads NKLD. The segment at 315–317 is G5; that stretch reads STK. Positions 504–536 are disordered; that stretch reads TSQSESRQKRQLHDISKTETSNEDEDEDDETPS. Positions 509–520 are enriched in basic and acidic residues; the sequence is SRQKRQLHDISK. The segment covering 524–536 has biased composition (acidic residues); the sequence is SNEDEDEDDETPS.

Belongs to the TRAFAC class translation factor GTPase superfamily. Classic translation factor GTPase family. EF-G/EF-2 subfamily. Belongs to the CWC complex (or CEF1-associated complex), a spliceosome sub-complex reminiscent of a late-stage spliceosome composed of the U2, U5 and U6 snRNAs and at least BUD13, BUD31, BRR2, CDC40, CEF1, CLF1, CUS1, CWC2, CWC15, CWC21, CWC22, CWC23, CWC24, CWC25, CWC27, ECM2, HSH155, IST3, ISY1, LEA1, MSL1, NTC20, PRP8, PRP9, PRP11, PRP19, PRP21, PRP22, PRP45, PRP46, SLU7, SMB1, SMD1, SMD2, SMD3, SMX2, SMX3, SNT309, SNU114, SPP2, SYF1, SYF2, RSE1 and YJU2. Component of the U4/U6-U5 tri-snRNP complex composed of the U4, U6 and U5 snRNAs and at least PRP3, PRP4, PRP6, PRP8, PRP18, PRP31, PRP38, SNU13, SNU23, SNU66, SNU114, SPP381, SMB1, SMD1, SMD2, SMD3, SMX2, SMX3, LSM2, LSM3, LSM4, LSM5, LSM6, LSM7, LSM8, BRR2 and DIB1. Interacts (via C-terminus) with CWC21. Interacts (via N-terminus) with PRP8 (via SCwid domain).

The protein resides in the nucleus. In terms of biological role, component of the U5 snRNP complex required for pre-mRNA splicing. Binds GTP. This chain is Pre-mRNA-splicing factor SNU114 (SNU114), found in Saccharomyces cerevisiae (strain ATCC 204508 / S288c) (Baker's yeast).